Reading from the N-terminus, the 429-residue chain is UPF0053 protein YugS (429 aa).

4 consecutive transmembrane segments (helical) span residues M1–A21, A61–F81, I101–L121, and A133–I153. Residues M1–E201 enclose the CNNM transmembrane domain. 2 consecutive CBS domains span residues M220 to L281 and I284 to E341.

It belongs to the UPF0053 family.

Its subcellular location is the cell membrane. The protein is UPF0053 protein YugS (yugS) of Bacillus subtilis (strain 168).